The following is a 709-amino-acid chain: Myotubularin-related protein 11 (709 aa).

Residues M1–S39 form a disordered region. Positions M196–Y639 constitute a Myotubularin phosphatase domain.

The protein belongs to the protein-tyrosine phosphatase family. Non-receptor class myotubularin subfamily. As to expression, expressed in bone marrow, spleen and thymus.

The chain is Myotubularin-related protein 11 (MTMR11) from Homo sapiens (Human).